Here is a 388-residue protein sequence, read N- to C-terminus: MAAISSPPLTQKALKVASPDTLHLVTDAPLPTLGQDDSVLIRVVCVAINPVDGKSAEMSPTPGATSGTDFAGIVVALHGDAKSRTETADTIKTGDRVMGFVFGNNPHVLGNGAFAEYVTLPRRFLWRVPDHMSLEAAASLPVGVASVGMALHYLRISMSSLLKAVSRSIAAPSASQPHDGAFDSDANVFILVYGGGTSTGAIAIQILKAAGFHPITCCSSESASRAKRLGAVATFDYQSATCGRDIRDYTNDSLTLAIDCLSESASMAICYEAMGSAGGRYVSLDPFPVRGCVRRSIVPDWICSFTQFGQSIPWAPPYNLDERPDDHRLAEEWYHLAQKLLDAELIEAPTLEIRSGGLLHVPEGVAAVKLGQIKRRKLVYHISEEALP.

Residue 51–54 (VDGK) participates in NADP(+) binding. 142–149 (VGVASVGM) provides a ligand contact to substrate. Residues 219–222 (SSES), Y237, and 284–285 (LD) contribute to the NADP(+) site. 304–308 (SFTQF) contacts substrate. 373–374 (IK) is an NADP(+) binding site.

It belongs to the zinc-containing alcohol dehydrogenase family. In terms of assembly, monomer.

It functions in the pathway secondary metabolite biosynthesis. Functionally, trans-enoyl reductase; part of the gene cluster that mediates the biosynthesis of tenellin-type 2-pyridones, iron-chelating compounds involved in iron stress tolerance, competition with the natural competitor fungus Metarhizium robertsii and insect hosts infection. TenC collaborates with the hybrid PKS-NRPS synthetase tenS to catalyze the assembly of the polyketide-amino acid backbone, since tenS lacks a designated enoylreductase (ER) domain. Upon formation of the polyketide backbone on the thiotemplate of tenS, the triketide is transferred to the NRPS module and linked to tyrosine to produce the pyrrolidine-2-dione intermediates, including pretellinin A, 11-hydropretellenin A, 12-hydropretellenin A, 13-hydropretellenin A, 14-hydropretellenin A, 12-oxopretellenin A and prototellinin D. The pathway begins with the assembly of the polyketide-amino acid backbone by the hybrid PKS-NRPS tenS with the help of the enoyl reductase tenC. These enzymes catalyze the synthesis of the pyrrolidine-2-dione intermediates pretellinin A, 11-hydropretellenin A, 12-hydropretellenin A, 13-hydropretellenin A, 14-hydropretellenin A, 12-oxopretellenin A and prototellinin D. The cytochrome P450 monooxygenase tenA then catalyzes an oxidative ring expansion of pretenellin A and 14-hydropretellenin A to form the 2-pyridone core, leading to pretenellin B and pyridovericin, respectively. The cytochrome P450 monooxygenase tenB is then required for the selective N-hydroxylation of the 2-pyridone nitrogen of yield tellinin and 15-hydroxytellenin (15-HT), respectively. The UDP-glucosyltransferase GT1 and the methyltransferase MT1, located outside the tenS gene cluster, contribute to the stepwise glycosylation and methylation of 15-HT to obtain the glycoside pyridovericin-N-O-(4-O-methyl-beta-D-glucopyranoside) (PMGP). Additional related compounds such as 1-O-methyl-15-HT, (8Z)-1-O-methyl-15-HT, and O-methyltenellin A are also produced but the enzymes involved in their biosynthesis have still to be determined. This Beauveria bassiana (White muscardine disease fungus) protein is Trans-enoyl reductase tenC.